We begin with the raw amino-acid sequence, 2534 residues long: Highly reducing polyketide synthase easB (2534 aa).

Residues 1–49 (MSPASRSRVEIADSESDSERLSSSPWSILSDNDSNTSDERSTRAGPGSL) are disordered. In terms of domain architecture, Ketosynthase family 3 (KS3) spans 49–470 (LEPIAVIGIG…GTNAHVIIDA (422 aa)). Catalysis depends on for beta-ketoacyl synthase activity residues cysteine 222, histidine 356, and histidine 396. Residues 587-885 (IFSGQGAQYA…LSGPVNQILK (299 aa)) are malonyl-CoA:ACP transacylase (MAT) domain. The N-terminal hotdog fold stretch occupies residues 973 to 1111 (HELLGTLSAD…GLVQAEVDSV (139 aa)). Residues 973-1273 (HELLGTLSAD…QGIRVTSLGG (301 aa)) are dehydratase (DH) domain. One can recognise a PKS/mFAS DH domain in the interval 973-1277 (HELLGTLSAD…VTSLGGDVAA (305 aa)). Histidine 1005 (proton acceptor; for dehydratase activity) is an active-site residue. A C-terminal hotdog fold region spans residues 1131–1277 (THGTIPQKFY…VTSLGGDVAA (147 aa)). Aspartate 1193 (proton donor; for dehydratase activity) is an active-site residue. Positions 1395–1625 (KTSALSLLTK…VFISTAPFPR (231 aa)) are methyltransferase (CMet) domain. Positions 1834 to 2146 (GLLETIRWKD…AGKHTGKIVL (313 aa)) are enoyl reductase (ER) domain. A Carrier domain is found at 2452 to 2529 (EAVHIVTNAI…QLAAIVAKES (78 aa)). Residues 2453–2526 (AVHIVTNAIL…SISQLAAIVA (74 aa)) are ketoreductase (KR) domain. Position 2489 is an O-(pantetheine 4'-phosphoryl)serine (serine 2489).

Its pathway is antibiotic biosynthesis. Its function is as follows. Polyketide synthase; part of the gene cluster that mediates the biosynthesis of emericellamides, secondary metabolites acting as antibiotics. The biosynthesis of emericellamides initiates from the highly reducing polyketide synthase easB which catalyzes the formation of the linear polyketide chain. EasB produces several polyketides that can be further processed by the downstream enzymes. The polyketides are released from easB as linear polyketide carboxylic acids, which are converted to CoA thioesters by the acyl-CoA ligase easD. The substrates are then loaded onto the acyltransferase easC, which shuttles them to the first thiolation (T) domain of the nonribosomal peptide synthetase easA. EasA then performs condensation of the polyketides with one glycine, two alanine, one valine and one leucine residues. A last step of cyclization leads to the production of emericellamides. This is Highly reducing polyketide synthase easB from Emericella nidulans (strain FGSC A4 / ATCC 38163 / CBS 112.46 / NRRL 194 / M139) (Aspergillus nidulans).